The chain runs to 928 residues: Isoleucine--tRNA ligase (928 aa).

Residues 57 to 67 (PFANGNIHMGH) carry the 'HIGH' region motif. Glu-552 lines the L-isoleucyl-5'-AMP pocket. The 'KMSKS' region signature appears at 593–597 (KMSKS). Lys-596 is a binding site for ATP. Cys-887, Cys-890, Cys-907, and Cys-910 together coordinate Zn(2+).

It belongs to the class-I aminoacyl-tRNA synthetase family. IleS type 1 subfamily. As to quaternary structure, monomer. Requires Zn(2+) as cofactor.

The protein resides in the cytoplasm. The catalysed reaction is tRNA(Ile) + L-isoleucine + ATP = L-isoleucyl-tRNA(Ile) + AMP + diphosphate. Functionally, catalyzes the attachment of isoleucine to tRNA(Ile). As IleRS can inadvertently accommodate and process structurally similar amino acids such as valine, to avoid such errors it has two additional distinct tRNA(Ile)-dependent editing activities. One activity is designated as 'pretransfer' editing and involves the hydrolysis of activated Val-AMP. The other activity is designated 'posttransfer' editing and involves deacylation of mischarged Val-tRNA(Ile). The sequence is that of Isoleucine--tRNA ligase from Latilactobacillus sakei subsp. sakei (strain 23K) (Lactobacillus sakei subsp. sakei).